A 334-amino-acid polypeptide reads, in one-letter code: Holliday junction branch migration complex subunit RuvB (334 aa).

The interval 4 to 184 is large ATPase domain (RuvB-L); sequence ADRLISAGVI…FGIVQRLEFY (181 aa). ATP is bound by residues Ile-23, Arg-24, Gly-65, Lys-68, Thr-69, Thr-70, 131 to 133, Arg-174, Tyr-184, and Arg-221; that span reads EDY. Residue Thr-69 coordinates Mg(2+). A small ATPAse domain (RuvB-S) region spans residues 185–255; sequence QVADLEHIVS…VAMKALDMLN (71 aa). The tract at residues 258–334 is head domain (RuvB-H); it reads AEGFDFMDRK…YKHFGITREE (77 aa). DNA is bound by residues Arg-294, Arg-313, and Arg-318.

This sequence belongs to the RuvB family. In terms of assembly, homohexamer. Forms an RuvA(8)-RuvB(12)-Holliday junction (HJ) complex. HJ DNA is sandwiched between 2 RuvA tetramers; dsDNA enters through RuvA and exits via RuvB. An RuvB hexamer assembles on each DNA strand where it exits the tetramer. Each RuvB hexamer is contacted by two RuvA subunits (via domain III) on 2 adjacent RuvB subunits; this complex drives branch migration. In the full resolvosome a probable DNA-RuvA(4)-RuvB(12)-RuvC(2) complex forms which resolves the HJ.

The protein resides in the cytoplasm. It carries out the reaction ATP + H2O = ADP + phosphate + H(+). Its function is as follows. The RuvA-RuvB-RuvC complex processes Holliday junction (HJ) DNA during genetic recombination and DNA repair, while the RuvA-RuvB complex plays an important role in the rescue of blocked DNA replication forks via replication fork reversal (RFR). RuvA specifically binds to HJ cruciform DNA, conferring on it an open structure. The RuvB hexamer acts as an ATP-dependent pump, pulling dsDNA into and through the RuvAB complex. RuvB forms 2 homohexamers on either side of HJ DNA bound by 1 or 2 RuvA tetramers; 4 subunits per hexamer contact DNA at a time. Coordinated motions by a converter formed by DNA-disengaged RuvB subunits stimulates ATP hydrolysis and nucleotide exchange. Immobilization of the converter enables RuvB to convert the ATP-contained energy into a lever motion, pulling 2 nucleotides of DNA out of the RuvA tetramer per ATP hydrolyzed, thus driving DNA branch migration. The RuvB motors rotate together with the DNA substrate, which together with the progressing nucleotide cycle form the mechanistic basis for DNA recombination by continuous HJ branch migration. Branch migration allows RuvC to scan DNA until it finds its consensus sequence, where it cleaves and resolves cruciform DNA. The sequence is that of Holliday junction branch migration complex subunit RuvB from Yersinia enterocolitica serotype O:8 / biotype 1B (strain NCTC 13174 / 8081).